Consider the following 410-residue polypeptide: Cell division protein FtsZ (410 aa).

GTP is bound by residues 22-26 (GGGGN), 109-111 (GTG), Glu140, Arg144, and Asp188. Residues 318–410 (ESKKDRKPHR…STPPFFRRKR (93 aa)) are disordered. Residues 330 to 344 (RQAVQPMQQTTQSVE) show a composition bias toward polar residues. Over residues 360 to 398 (WDIRREQNTRPKVDESSLEQVDKKEFDTFHREEPNHNDD) the composition is skewed to basic and acidic residues.

Belongs to the FtsZ family. As to quaternary structure, homodimer. Polymerizes to form a dynamic ring structure in a strictly GTP-dependent manner. Interacts directly with several other division proteins.

It localises to the cytoplasm. Functionally, essential cell division protein that forms a contractile ring structure (Z ring) at the future cell division site. The regulation of the ring assembly controls the timing and the location of cell division. One of the functions of the FtsZ ring is to recruit other cell division proteins to the septum to produce a new cell wall between the dividing cells. Binds GTP and shows GTPase activity. This chain is Cell division protein FtsZ, found in Enterococcus faecalis (strain ATCC 700802 / V583).